A 239-amino-acid chain; its full sequence is U2 small nuclear ribonucleoprotein A' (239 aa).

LRR repeat units follow at residues 19–40 (KETE…GVLR), 42–63 (VHDA…PRMK), 64–85 (RLQT…IGKV), and 88–109 (NLKT…DPLA). Residues 122–160 (NPVAQKQYYRLYLIWRIPSLHILDFERVRRNERLRAEEV) enclose the LRRCT domain.

The protein belongs to the U2 small nuclear ribonucleoprotein A family. Belongs to the 40S cdc5-associated complex (or cwf complex), a spliceosome sub-complex reminiscent of a late-stage spliceosome composed of the U2, U5 and U6 snRNAs and at least brr2, cdc5, cwf2/prp3, cwf3/syf1, cwf4/syf3, cwf5/ecm2, spp42/cwf6, cwf7/spf27, cwf8, cwf9, cwf10, cwf11, cwf12, prp45/cwf13, cwf14, cwf15, cwf16, cwf17, cwf18, cwf19, cwf20, cwf21, cwf22, cwf23, cwf24, cwf25, cwf26, cyp7/cwf27, cwf28, cwf29/ist3, lea1, msl1, prp5/cwf1, prp10, prp12/sap130, prp17, prp22, sap61, sap62, sap114, sap145, slu7, smb1, smd1, smd3, smf1, smg1 and syf2.

The protein localises to the nucleus. In terms of biological role, involved in pre-mRNA splicing. This protein is associated with sn-RNP U2. It helps the A' protein to bind stem loop IV of U2 snRNA. This Schizosaccharomyces pombe (strain 972 / ATCC 24843) (Fission yeast) protein is U2 small nuclear ribonucleoprotein A' (lea1).